A 321-amino-acid chain; its full sequence is Lipoyl synthase (321 aa).

The [4Fe-4S] cluster site is built by Cys68, Cys73, Cys79, Cys94, Cys98, Cys101, and Ser308. The 218-residue stretch at 80 to 297 (FNHGTATFMI…KAEALAMGFT (218 aa)) folds into the Radical SAM core domain.

The protein belongs to the radical SAM superfamily. Lipoyl synthase family. [4Fe-4S] cluster serves as cofactor.

The protein localises to the cytoplasm. The enzyme catalyses [[Fe-S] cluster scaffold protein carrying a second [4Fe-4S](2+) cluster] + N(6)-octanoyl-L-lysyl-[protein] + 2 oxidized [2Fe-2S]-[ferredoxin] + 2 S-adenosyl-L-methionine + 4 H(+) = [[Fe-S] cluster scaffold protein] + N(6)-[(R)-dihydrolipoyl]-L-lysyl-[protein] + 4 Fe(3+) + 2 hydrogen sulfide + 2 5'-deoxyadenosine + 2 L-methionine + 2 reduced [2Fe-2S]-[ferredoxin]. It functions in the pathway protein modification; protein lipoylation via endogenous pathway; protein N(6)-(lipoyl)lysine from octanoyl-[acyl-carrier-protein]: step 2/2. Catalyzes the radical-mediated insertion of two sulfur atoms into the C-6 and C-8 positions of the octanoyl moiety bound to the lipoyl domains of lipoate-dependent enzymes, thereby converting the octanoylated domains into lipoylated derivatives. The chain is Lipoyl synthase from Salmonella arizonae (strain ATCC BAA-731 / CDC346-86 / RSK2980).